A 209-amino-acid chain; its full sequence is Ribosomal RNA large subunit methyltransferase E (209 aa).

S-adenosyl-L-methionine contacts are provided by G63, W65, D83, D99, and D124. K164 serves as the catalytic Proton acceptor.

Belongs to the class I-like SAM-binding methyltransferase superfamily. RNA methyltransferase RlmE family.

Its subcellular location is the cytoplasm. The catalysed reaction is uridine(2552) in 23S rRNA + S-adenosyl-L-methionine = 2'-O-methyluridine(2552) in 23S rRNA + S-adenosyl-L-homocysteine + H(+). In terms of biological role, specifically methylates the uridine in position 2552 of 23S rRNA at the 2'-O position of the ribose in the fully assembled 50S ribosomal subunit. The chain is Ribosomal RNA large subunit methyltransferase E from Shewanella halifaxensis (strain HAW-EB4).